Here is a 144-residue protein sequence, read N- to C-terminus: MNFKYIVAVSFLIASAYARSVQNDEQSLSQRDVLEEESLREIRGIGGALLSAGKSALKGLAKGLAEHFASGKRTAEDHEVMKRLEAVMRDLDSLDYPEEATERETRGFNQEEIANLFTKKEKRILGPVLGLVGNALGGLLKNLG.

The first 18 residues, Met-1–Ala-18, serve as a signal peptide directing secretion. The propeptide occupies Arg-19 to Arg-43. Ser-70 carries the serine amide modification. A propeptide spanning residues Thr-74 to Arg-123 is cleaved from the precursor. Leu-143 bears the Leucine amide mark.

This sequence belongs to the bombinin family. Expressed by the skin glands.

It localises to the secreted. Functionally, maximin-10 shows antimicrobial activity against bacteria and against the fungus C.albicans. It has little hemolytic activity. Maximin-H15 shows antimicrobial activity against bacteria and against the fungus C.albicans. Shows strong hemolytic activity. In Bombina maxima (Giant fire-bellied toad), this protein is Maximins 10/H15.